Consider the following 82-residue polypeptide: Consomatin Ro2 (82 aa).

A signal peptide spans 1-22 (MQTAYWLMVMMMVWITAPLYEG). Positions 23–57 (GKPNDVIRGLVPDDLTPQFILRSLISRRRSDKDVR) are excised as a propeptide. Cysteine 62 and cysteine 68 are joined by a disulfide. Position 64 is a D-tryptophan (tryptophan 64). 4-hydroxyproline is present on residues proline 69 and proline 70. Residues 72-82 (LWRRHDRKGKD) constitute a propeptide that is removed on maturation.

Belongs to the conotoxin C superfamily. Consomatin family. As to expression, expressed by the venom duct.

It is found in the secreted. Moderately activates human somatostatin receptors (SSTR) with a preferential activation of SSTR1 and SSTR4. In vivo, does not cause behavioral changes in mice within a few minutes of intracranial injection, but causes a progressive loss of movement thereafter. Four to five hours after injection, mice recover, even with the highest dose tested. Shows antinociception and antihyperalgesia activities in two mouse models of acute pain, most probably by acting outside the central nervous system. In Conus rolani (Cone snail), this protein is Consomatin Ro2.